A 90-amino-acid chain; its full sequence is Auxin-responsive protein SAUR24 (90 aa).

Belongs to the ARG7 family.

It localises to the cell membrane. Its function is as follows. Functions as a positive effector of cell expansion through modulation of auxin transport. This is Auxin-responsive protein SAUR24 from Arabidopsis thaliana (Mouse-ear cress).